We begin with the raw amino-acid sequence, 89 residues long: Small ribosomal subunit protein uS15 (89 aa).

This sequence belongs to the universal ribosomal protein uS15 family. As to quaternary structure, part of the 30S ribosomal subunit. Forms a bridge to the 50S subunit in the 70S ribosome, contacting the 23S rRNA.

Functionally, one of the primary rRNA binding proteins, it binds directly to 16S rRNA where it helps nucleate assembly of the platform of the 30S subunit by binding and bridging several RNA helices of the 16S rRNA. Its function is as follows. Forms an intersubunit bridge (bridge B4) with the 23S rRNA of the 50S subunit in the ribosome. The polypeptide is Small ribosomal subunit protein uS15 (Roseiflexus castenholzii (strain DSM 13941 / HLO8)).